We begin with the raw amino-acid sequence, 564 residues long: Dihydropyrimidinase-related protein 5 (564 aa).

Phosphothreonine is present on residues T509 and T514. Residues S532 and S538 each carry the phosphoserine modification. R559 is modified (omega-N-methylarginine).

It belongs to the metallo-dependent hydrolases superfamily. Hydantoinase/dihydropyrimidinase family. As to quaternary structure, homotetramer, and heterotetramer with other DPYS-like proteins. Interacts with DPYSL2, DPYSL3 and DPYSL4. Interacts with MAP2 and TUBB3.

The protein resides in the cytoplasm. In terms of biological role, involved in the negative regulation of dendrite outgrowth. This is Dihydropyrimidinase-related protein 5 (DPYSL5) from Homo sapiens (Human).